We begin with the raw amino-acid sequence, 315 residues long: Periplasmic [NiFeSe] hydrogenase small subunit (315 aa).

Residues 1–32 (MSLSRREFVKLCSAGVAGLGISQIYHPGIVHA) constitute a signal peptide (tat-type signal). [4Fe-4S] cluster contacts are provided by Cys-50, Cys-53, Cys-158, Cys-196, His-240, Cys-243, Cys-263, Cys-269, Cys-278, Cys-290, Cys-296, and Cys-299.

It belongs to the [NiFe]/[NiFeSe] hydrogenase small subunit family. As to quaternary structure, heterodimer of a large and a small subunit. [4Fe-4S] cluster is required as a cofactor. Predicted to be exported by the Tat system. The position of the signal peptide cleavage has been experimentally proven.

It localises to the periplasm. The enzyme catalyses H2 + A = AH2. This chain is Periplasmic [NiFeSe] hydrogenase small subunit, found in Desulfomicrobium baculatum (Desulfovibrio baculatus).